A 257-amino-acid polypeptide reads, in one-letter code: UPF0246 protein CPS_4102 (257 aa).

This sequence belongs to the UPF0246 family.

In Colwellia psychrerythraea (strain 34H / ATCC BAA-681) (Vibrio psychroerythus), this protein is UPF0246 protein CPS_4102.